Here is a 376-residue protein sequence, read N- to C-terminus: Chaperone protein DnaJ (376 aa).

The J domain occupies 4 to 68 (DYYQLLGVAR…ETRARYDQFG (65 aa)). The CR-type zinc-finger motif lies at 135 to 217 (GGEKEIRVTH…CGGAGRLRRP (83 aa)). Residues Cys-148, Cys-151, Cys-165, Cys-168, Cys-191, Cys-194, Cys-205, and Cys-208 each coordinate Zn(2+). CXXCXGXG motif repeat units lie at residues 148–155 (CGTCQGSG), 165–172 (CTTCGGAG), 191–198 (CPTCEGSG), and 205–212 (CDDCGGAG).

The protein belongs to the DnaJ family. Homodimer. Zn(2+) serves as cofactor.

Its subcellular location is the cytoplasm. In terms of biological role, participates actively in the response to hyperosmotic and heat shock by preventing the aggregation of stress-denatured proteins and by disaggregating proteins, also in an autonomous, DnaK-independent fashion. Unfolded proteins bind initially to DnaJ; upon interaction with the DnaJ-bound protein, DnaK hydrolyzes its bound ATP, resulting in the formation of a stable complex. GrpE releases ADP from DnaK; ATP binding to DnaK triggers the release of the substrate protein, thus completing the reaction cycle. Several rounds of ATP-dependent interactions between DnaJ, DnaK and GrpE are required for fully efficient folding. Also involved, together with DnaK and GrpE, in the DNA replication of plasmids through activation of initiation proteins. The chain is Chaperone protein DnaJ from Synechococcus sp. (strain ATCC 27144 / PCC 6301 / SAUG 1402/1) (Anacystis nidulans).